The following is a 501-amino-acid chain: Aspartyl/glutamyl-tRNA(Asn/Gln) amidotransferase subunit B (501 aa).

The tract at residues 272–291 (QETRHYQETDGTTSKGRPKE) is disordered.

This sequence belongs to the GatB/GatE family. GatB subfamily. As to quaternary structure, heterotrimer of A, B and C subunits.

It catalyses the reaction L-glutamyl-tRNA(Gln) + L-glutamine + ATP + H2O = L-glutaminyl-tRNA(Gln) + L-glutamate + ADP + phosphate + H(+). It carries out the reaction L-aspartyl-tRNA(Asn) + L-glutamine + ATP + H2O = L-asparaginyl-tRNA(Asn) + L-glutamate + ADP + phosphate + 2 H(+). Functionally, allows the formation of correctly charged Asn-tRNA(Asn) or Gln-tRNA(Gln) through the transamidation of misacylated Asp-tRNA(Asn) or Glu-tRNA(Gln) in organisms which lack either or both of asparaginyl-tRNA or glutaminyl-tRNA synthetases. The reaction takes place in the presence of glutamine and ATP through an activated phospho-Asp-tRNA(Asn) or phospho-Glu-tRNA(Gln). This Corynebacterium efficiens (strain DSM 44549 / YS-314 / AJ 12310 / JCM 11189 / NBRC 100395) protein is Aspartyl/glutamyl-tRNA(Asn/Gln) amidotransferase subunit B.